We begin with the raw amino-acid sequence, 229 residues long: Large ribosomal subunit protein uL1 (229 aa).

The protein belongs to the universal ribosomal protein uL1 family. Part of the 50S ribosomal subunit.

Functionally, binds directly to 23S rRNA. The L1 stalk is quite mobile in the ribosome, and is involved in E site tRNA release. Protein L1 is also a translational repressor protein, it controls the translation of the L11 operon by binding to its mRNA. The protein is Large ribosomal subunit protein uL1 of Listeria innocua serovar 6a (strain ATCC BAA-680 / CLIP 11262).